A 563-amino-acid chain; its full sequence is Eukaryotic translation initiation factor 3 subunit D-1 (563 aa).

The disordered stretch occupies residues 98–136; it reads VQKPPHQRGRFRNMRGRGGRGRNPRGGLNNHHHHGMTTL. Over residues 100–120 the composition is skewed to basic residues; sequence KPPHQRGRFRNMRGRGGRGRN. Residues 291–305 form an RNA gate region; sequence EFDLLTVNESSVEPP.

Belongs to the eIF-3 subunit D family. As to quaternary structure, component of the eukaryotic translation initiation factor 3 (eIF-3) complex. The eIF-3 complex interacts with pix.

It is found in the cytoplasm. Functionally, mRNA cap-binding component of the eukaryotic translation initiation factor 3 (eIF-3) complex, which is involved in protein synthesis of a specialized repertoire of mRNAs and, together with other initiation factors, stimulates binding of mRNA and methionyl-tRNAi to the 40S ribosome. The eIF-3 complex specifically targets and initiates translation of a subset of mRNAs involved in cell proliferation. In the eIF-3 complex, eif3d specifically recognizes and binds the 7-methylguanosine cap of a subset of mRNAs. This is Eukaryotic translation initiation factor 3 subunit D-1 from Drosophila pseudoobscura pseudoobscura (Fruit fly).